The chain runs to 131 residues: T3C protein (131 aa).

The polypeptide is T3C protein (Ovis aries (Sheep)).